The primary structure comprises 167 residues: 3-isopropylmalate dehydratase small subunit (167 aa).

Belongs to the LeuD family. LeuD type 2 subfamily. As to quaternary structure, heterodimer of LeuC and LeuD.

It carries out the reaction (2R,3S)-3-isopropylmalate = (2S)-2-isopropylmalate. It functions in the pathway amino-acid biosynthesis; L-leucine biosynthesis; L-leucine from 3-methyl-2-oxobutanoate: step 2/4. Functionally, catalyzes the isomerization between 2-isopropylmalate and 3-isopropylmalate, via the formation of 2-isopropylmaleate. The sequence is that of 3-isopropylmalate dehydratase small subunit from Oleidesulfovibrio alaskensis (strain ATCC BAA-1058 / DSM 17464 / G20) (Desulfovibrio alaskensis).